The chain runs to 312 residues: MENGSYTSYFILLGLFNHTRAHQVLFMMVLSIVLTSLFGNSLMILLIHWDHRLHTPMYFLLSQLSLMDVMLVSTTVPKMAADYLTGSKAISRAGCGAQIFFLPTLGGGECFLLAAMAYDRYAAVCHPLRYPTLMSWQLCLRMNLSCWLLGAADGLLQAVATLSFPYCGAHEIDHFFCETPVLVRLACADTSVFENAMYICCVLMLLVPFSLILSSYGLILAAVLHMRSTEARKKAFATCSSHVAVVGLFYGAAIFTYMRPKSHRSTNHDKVVSAFYTMFTPLLNPLIYSVKNSEVKGALTRCMGRCVALSRE.

Residues 1–26 (MENGSYTSYFILLGLFNHTRAHQVLF) are Extracellular-facing. Residues N3 and N17 are each glycosylated (N-linked (GlcNAc...) asparagine). A helical transmembrane segment spans residues 27–47 (MMVLSIVLTSLFGNSLMILLI). Over 48–55 (HWDHRLHT) the chain is Cytoplasmic. The chain crosses the membrane as a helical span at residues 56–76 (PMYFLLSQLSLMDVMLVSTTV). Over 77-96 (PKMAADYLTGSKAISRAGCG) the chain is Extracellular. The cysteines at positions 95 and 177 are disulfide-linked. Residues 97–117 (AQIFFLPTLGGGECFLLAAMA) form a helical membrane-spanning segment. Residues 118–143 (YDRYAAVCHPLRYPTLMSWQLCLRMN) are Cytoplasmic-facing. Residues 144–164 (LSCWLLGAADGLLQAVATLSF) form a helical membrane-spanning segment. Residues 165–201 (PYCGAHEIDHFFCETPVLVRLACADTSVFENAMYICC) are Extracellular-facing. The chain crosses the membrane as a helical span at residues 202–222 (VLMLLVPFSLILSSYGLILAA). Residues 223–234 (VLHMRSTEARKK) lie on the Cytoplasmic side of the membrane. A helical membrane pass occupies residues 235–255 (AFATCSSHVAVVGLFYGAAIF). Residues 256-269 (TYMRPKSHRSTNHD) lie on the Extracellular side of the membrane. A helical transmembrane segment spans residues 270-290 (KVVSAFYTMFTPLLNPLIYSV). Topologically, residues 291-312 (KNSEVKGALTRCMGRCVALSRE) are cytoplasmic.

This sequence belongs to the G-protein coupled receptor 1 family.

It localises to the cell membrane. Odorant receptor. The sequence is that of Olfactory receptor 2T8 (OR2T8) from Homo sapiens (Human).